A 24-amino-acid polypeptide reads, in one-letter code: Brevinin-1E (24 aa).

C18 and C24 form a disulfide bridge.

In terms of tissue distribution, expressed by the skin glands.

The protein resides in the secreted. In terms of biological role, antimicrobial peptide. Stimulates insulin release by BRIN-BD11 cells in vitro. This is Brevinin-1E from Pelophylax saharicus (Sahara frog).